Reading from the N-terminus, the 335-residue chain is Glycerol-3-phosphate dehydrogenase [NAD(P)+] (335 aa).

Residues serine 10, phenylalanine 11, arginine 31, and lysine 105 each coordinate NADPH. The sn-glycerol 3-phosphate site is built by lysine 105, glycine 136, and serine 138. Alanine 140 serves as a coordination point for NADPH. The sn-glycerol 3-phosphate site is built by lysine 191, aspartate 244, serine 254, arginine 255, and asparagine 256. The Proton acceptor role is filled by lysine 191. Arginine 255 contacts NADPH. Positions 279 and 281 each coordinate NADPH.

It belongs to the NAD-dependent glycerol-3-phosphate dehydrogenase family.

The protein localises to the cytoplasm. The catalysed reaction is sn-glycerol 3-phosphate + NAD(+) = dihydroxyacetone phosphate + NADH + H(+). The enzyme catalyses sn-glycerol 3-phosphate + NADP(+) = dihydroxyacetone phosphate + NADPH + H(+). The protein operates within membrane lipid metabolism; glycerophospholipid metabolism. Catalyzes the reduction of the glycolytic intermediate dihydroxyacetone phosphate (DHAP) to sn-glycerol 3-phosphate (G3P), the key precursor for phospholipid synthesis. This Leptospira interrogans serogroup Icterohaemorrhagiae serovar copenhageni (strain Fiocruz L1-130) protein is Glycerol-3-phosphate dehydrogenase [NAD(P)+].